The following is a 506-amino-acid chain: Zinc finger and SCAN domain containing protein 4C (506 aa).

The disordered stretch occupies residues 1-24 (MASQQAPAKDLQTNNLEFTPTDSS). Residues 37 to 119 (SAQLNFSPSN…RFMESLTDEC (83 aa)) form the SCAN box domain. C2H2-type zinc fingers lie at residues 395–417 (YKCEECSRMFKHARSLSSHQRTH), 424–446 (LLCVTCQKMFKRVSDRRTHEIIH), 452–474 (FKCSTCEKSFSHKTNLKSHEMIH), and 480–503 (YVCSLCSRRFRQSSTYHRHLRNYH).

Embryonic stem (ES) cell-specific. Expressed in only 5% of ES cells at a given time, but nearly all ES cells express it at least once during 9 passages.

It localises to the nucleus. It is found in the chromosome. The protein resides in the telomere. Embryonic stem (ES) cell-specific transcription factor required to regulate ES cell pluripotency. Binds telomeres and plays a key role in genomic stability in ES cells by regulating telomere elongation. Acts as an activator of spontaneous telomere sister chromatid exchange (T-SCE) and telomere elongation in undifferentiated ES cells. This chain is Zinc finger and SCAN domain containing protein 4C (Zscan4c), found in Mus musculus (Mouse).